The following is a 305-amino-acid chain: Spermatogenesis-associated protein 4 (305 aa).

Residues 49 to 155 (SRLSRSVLRW…EEVYTLLTHR (107 aa)) enclose the Calponin-homology (CH) domain.

It localises to the nucleus. In terms of biological role, may play a role in apoptosis regulation. This is Spermatogenesis-associated protein 4 (SPATA4) from Pan troglodytes (Chimpanzee).